Consider the following 373-residue polypeptide: STE20-related kinase adapter protein alpha (373 aa).

The Protein kinase domain maps to 11 to 321 (YELLTVIGKG…ASTLLNHSFF (311 aa)). Over residues 255–281 (STSRSAANSGLSESLAPSTPRTSNGDS) the composition is skewed to polar residues. A disordered region spans residues 255–288 (STSRSAANSGLSESLAPSTPRTSNGDSPSHPYHR). The residue at position 361 (Thr361) is a Phosphothreonine; by LKB1.

Belongs to the protein kinase superfamily. STE Ser/Thr protein kinase family. STE20 subfamily. Component of a trimeric complex composed of STK11/LKB1, STRAD (STRADA or STRADB) and CAB39/MO25 (CAB39/MO25alpha or CAB39L/MO25beta): the complex tethers STK11/LKB1 in the cytoplasm and stimulates its catalytic activity.

The protein resides in the nucleus. It localises to the cytoplasm. Functionally, pseudokinase which, in complex with CAB39/MO25 (CAB39/MO25alpha or CAB39L/MO25beta), binds to and activates STK11/LKB1. Adopts a closed conformation typical of active protein kinases and binds STK11/LKB1 as a pseudosubstrate, promoting conformational change of STK11/LKB1 in an active conformation. The polypeptide is STE20-related kinase adapter protein alpha (STRADA) (Bos taurus (Bovine)).